Here is a 446-residue protein sequence, read N- to C-terminus: D(1A) dopamine receptor (446 aa).

Over 1 to 23 the chain is Extracellular; it reads MRTLNTSTMDGTGLVVERDFSFR. The N-linked (GlcNAc...) asparagine glycan is linked to Asn5. Residues 24–49 form a helical membrane-spanning segment; sequence ILTACFLSLLILSTLLGNTLVCAAVI. The Cytoplasmic segment spans residues 50–60; the sequence is RFRHLRSKVTN. A helical membrane pass occupies residues 61 to 87; the sequence is FFVISLAVSDLLVAVLVMPWKAVAEIA. Topologically, residues 88-96 are extracellular; it reads GFWPFGSFC. Cysteines 96 and 186 form a disulfide. Residues 97-119 form a helical membrane-spanning segment; it reads NIWVAFDIMCSTASILNLCVISV. Residues 120–138 are Cytoplasmic-facing; it reads DRYWAISSPFRYERKMTPK. Residues 139-163 traverse the membrane as a helical segment; sequence AAFILISVAWTLSVLISFIPVQLSW. Residues 164 to 192 lie on the Extracellular side of the membrane; that stretch reads HKAKPTSPSDGNVTSLGKTTHNCDSSLSR. A helical transmembrane segment spans residues 193–218; sequence TYAISSSLISFYIPVAIMIVTYTRIY. The Cytoplasmic portion of the chain corresponds to 219-272; sequence RIAQKQIRRISALERAAVHAKNCQTTAGNGNPAECSQPESSFKMSFKRETKVLK. A helical membrane pass occupies residues 273-299; the sequence is TLSVIMGVFVCCWLPFFILNCMVPFCG. The Extracellular portion of the chain corresponds to 300 to 312; sequence SGETKPFCIDSIT. The chain crosses the membrane as a helical span at residues 313 to 337; the sequence is FDVFVWFGWANSSLNPIIYAFNADF. The Cytoplasmic segment spans residues 338–446; it reads RKAFSTLLGC…PITQNGQHPT (109 aa). 2 S-palmitoyl cysteine lipidation sites follow: Cys347 and Cys351.

Belongs to the G-protein coupled receptor 1 family. In terms of assembly, interacts with DNAJC14 via its C-terminus. Interacts with DRD2. Interacts with DORIP1.

The protein localises to the cell membrane. It is found in the endoplasmic reticulum membrane. The protein resides in the cell projection. It localises to the cilium membrane. Its subcellular location is the dendrite. The protein localises to the dendritic spine. Dopamine receptor whose activity is mediated by G proteins which activate adenylyl cyclase. This chain is D(1A) dopamine receptor (DRD1), found in Sus scrofa (Pig).